Reading from the N-terminus, the 120-residue chain is A-type ATP synthase subunit F (120 aa).

The protein belongs to the V-ATPase F subunit family. Has multiple subunits with at least A(3), B(3), C, D, E, F, H, I and proteolipid K(x).

The protein localises to the cell membrane. Functionally, component of the A-type ATP synthase that produces ATP from ADP in the presence of a proton gradient across the membrane. This is A-type ATP synthase subunit F from Halobacterium salinarum (strain ATCC 29341 / DSM 671 / R1).